Consider the following 70-residue polypeptide: Small ribosomal subunit protein bS21 (70 aa).

The protein belongs to the bacterial ribosomal protein bS21 family.

This chain is Small ribosomal subunit protein bS21, found in Herminiimonas arsenicoxydans.